Here is a 356-residue protein sequence, read N- to C-terminus: Histidinol-phosphate aminotransferase (356 aa).

Lysine 214 carries the post-translational modification N6-(pyridoxal phosphate)lysine.

It belongs to the class-II pyridoxal-phosphate-dependent aminotransferase family. Histidinol-phosphate aminotransferase subfamily. In terms of assembly, homodimer. Pyridoxal 5'-phosphate serves as cofactor.

The enzyme catalyses L-histidinol phosphate + 2-oxoglutarate = 3-(imidazol-4-yl)-2-oxopropyl phosphate + L-glutamate. The protein operates within amino-acid biosynthesis; L-histidine biosynthesis; L-histidine from 5-phospho-alpha-D-ribose 1-diphosphate: step 7/9. The chain is Histidinol-phosphate aminotransferase from Escherichia coli O127:H6 (strain E2348/69 / EPEC).